Consider the following 342-residue polypeptide: Leucine-rich repeat-containing protein 23 (342 aa).

A compositionally biased stretch (acidic residues) spans 1–30 (MSDEDDLEDFETDQDDLEREDDEKETEEWE). The tract at residues 1-42 (MSDEDDLEDFETDQDDLEREDDEKETEEWEDYRKEGEESEDW) is disordered. Residues 3–27 (DEDDLEDFETDQDDLEREDDEKETE) adopt a coiled-coil conformation. LRR repeat units lie at residues 91 to 112 (HLRYVDVSENHLTDLSPLNHLT), 113 to 133 (NLLWLKADGNQLRSARLNELP), 134 to 154 (YLQIASFAYNQITDTEGISHP), 155 to 176 (RLASLDLKGNRIHMVTGLDPQK), 179 to 199 (SLHTLELRGNQLNSTLGINLP), 200 to 221 (KLKNLFLAQNMLKKVEGLENLS), 222 to 243 (NLTTLHLRDNQIETLSGFSKEM), and 245 to 266 (SLQYLNLRGNMVADLGELAKLR). The interaction with RSPH9 stretch occupies residues 207–342 (AQNMLKKVEG…PESELDQSST (136 aa)). In terms of domain architecture, LRRCT spans 279–317 (NPCTDENDYRQEALVQIAHLERLDKEFYEEEERAEADEI). Residues 306-332 (YEEEERAEADEIRQRMKEEQEQEAEVE) are a coiled coil. The disordered stretch occupies residues 307 to 342 (EEEERAEADEIRQRMKEEQEQEAEVEPESELDQSST). A compositionally biased stretch (basic and acidic residues) spans 314–324 (ADEIRQRMKEE). Positions 325 to 342 (QEQEAEVEPESELDQSST) are enriched in acidic residues.

In terms of assembly, component of the axonemal radial spoke complex. Interacts with RSPH3. Interacts with RSPH9.

It is found in the cytoplasm. Its subcellular location is the cytoskeleton. The protein localises to the flagellum axoneme. Functionally, essential for sperm motility and male fertility. Plays an important role in the proper assembly of the third radial spoke (RS3) head and the bridge structure between RS2 and RS3 in the sperm flagella. This Bos taurus (Bovine) protein is Leucine-rich repeat-containing protein 23 (LRRC23).